Consider the following 313-residue polypeptide: Sideroflexin-4 (313 aa).

2 consecutive transmembrane segments (helical) span residues 87-107 (AAFL…DTGI) and 141-161 (TLLG…PHLF). K173 is subject to N6-acetyllysine. A run of 3 helical transmembrane segments spans residues 175 to 191 (TLPI…NVFA), 230 to 247 (AVLF…IHIF), and 269 to 289 (FFMM…IGQI).

Belongs to the sideroflexin family. Largely restricted to kidney, brain and heart.

Its subcellular location is the mitochondrion inner membrane. Functionally, mitochondrial amino-acid transporter. Does not act as a serine transporter: not able to mediate transport of serine into mitochondria. This Mus musculus (Mouse) protein is Sideroflexin-4.